A 305-amino-acid chain; its full sequence is Ornithine carbamoyltransferase (305 aa).

Residues 50–53, Gln-77, Arg-101, and 128–131 each bind carbamoyl phosphate; these read STRT and HPCQ. L-ornithine is bound by residues Asn-159, Asp-222, and 226-227; that span reads SM. Carbamoyl phosphate-binding positions include 262-263 and Arg-290; that span reads CL.

It belongs to the aspartate/ornithine carbamoyltransferase superfamily. OTCase family.

The protein resides in the cytoplasm. The catalysed reaction is carbamoyl phosphate + L-ornithine = L-citrulline + phosphate + H(+). It participates in amino-acid biosynthesis; L-arginine biosynthesis; L-arginine from L-ornithine and carbamoyl phosphate: step 1/3. Reversibly catalyzes the transfer of the carbamoyl group from carbamoyl phosphate (CP) to the N(epsilon) atom of ornithine (ORN) to produce L-citrulline. The polypeptide is Ornithine carbamoyltransferase (Synechococcus elongatus (strain ATCC 33912 / PCC 7942 / FACHB-805) (Anacystis nidulans R2)).